Here is a 386-residue protein sequence, read N- to C-terminus: Homeobox protein Hox-A13 (386 aa).

The homeobox DNA-binding region spans 320–379; the sequence is GRKKRVPYTKVQLKELEREYATNKFITKDKRRRISATTNLSERQVTIWFQNRRVKEKKVI.

This sequence belongs to the Abd-B homeobox family. As to quaternary structure, binds DNA as a homodimer. Interacts with MEIS1, MEIS2 and MEIS3.

It localises to the nucleus. Its function is as follows. Sequence-specific, AT-rich binding transcription factor which is part of a developmental regulatory system that provides cells with specific positional identities on the anterior-posterior axis. The chain is Homeobox protein Hox-A13 (Hoxa13) from Mus musculus (Mouse).